Reading from the N-terminus, the 153-residue chain is ATP synthase subunit b' (153 aa).

The helical transmembrane segment at 23–40 (LMAIQVVALTYILNSLFF) threads the bilayer.

The protein belongs to the ATPase B chain family. In terms of assembly, F-type ATPases have 2 components, F(1) - the catalytic core - and F(0) - the membrane proton channel. F(1) has five subunits: alpha(3), beta(3), gamma(1), delta(1), epsilon(1). F(0) has four main subunits: a(1), b(1), b'(1) and c(10-14). The alpha and beta chains form an alternating ring which encloses part of the gamma chain. F(1) is attached to F(0) by a central stalk formed by the gamma and epsilon chains, while a peripheral stalk is formed by the delta, b and b' chains.

The protein resides in the cellular thylakoid membrane. Its function is as follows. F(1)F(0) ATP synthase produces ATP from ADP in the presence of a proton or sodium gradient. F-type ATPases consist of two structural domains, F(1) containing the extramembraneous catalytic core and F(0) containing the membrane proton channel, linked together by a central stalk and a peripheral stalk. During catalysis, ATP synthesis in the catalytic domain of F(1) is coupled via a rotary mechanism of the central stalk subunits to proton translocation. Component of the F(0) channel, it forms part of the peripheral stalk, linking F(1) to F(0). The b'-subunit is a diverged and duplicated form of b found in plants and photosynthetic bacteria. This chain is ATP synthase subunit b', found in Prochlorococcus marinus (strain MIT 9215).